The following is a 117-amino-acid chain: MDKKASRIRRATRARRKIAELGATRLVVHRTPRHVYAQVISANGSEVIAAASTVEKAIREQVKNTGNVDAAKAVGKAVAERALEKGVASVAFDRSGFQYHGRVAALAESAREAGLKF.

Belongs to the universal ribosomal protein uL18 family. Part of the 50S ribosomal subunit; part of the 5S rRNA/L5/L18/L25 subcomplex. Contacts the 5S and 23S rRNAs.

Its function is as follows. This is one of the proteins that bind and probably mediate the attachment of the 5S RNA into the large ribosomal subunit, where it forms part of the central protuberance. In Vibrio atlanticus (strain LGP32) (Vibrio splendidus (strain Mel32)), this protein is Large ribosomal subunit protein uL18.